We begin with the raw amino-acid sequence, 210 residues long: Chaperone protein TorD (210 aa).

It belongs to the TorD/DmsD family. TorD subfamily.

It localises to the cytoplasm. In terms of biological role, involved in the biogenesis of TorA. Acts on TorA before the insertion of the molybdenum cofactor and, as a result, probably favors a conformation of the apoenzyme that is competent for acquiring the cofactor. The sequence is that of Chaperone protein TorD from Salmonella newport (strain SL254).